The sequence spans 385 residues: Zinc cluster transcription factor CZF1 (385 aa).

A compositionally biased stretch (polar residues) spans 1 to 19 (MSSIPNINWNDPNNGKSNT). 3 disordered regions span residues 1 to 117 (MSSI…QQPL), 154 to 216 (LQQR…QQWD), and 233 to 308 (SSIQ…KPIT). A compositionally biased stretch (low complexity) spans 20–38 (SRQSQPQPQLPSNVSPPNS). Composition is skewed to polar residues over residues 52-67 (YGSS…NPNT) and 88-97 (YPVQQTAQQR). Low complexity-rich tracts occupy residues 102-117 (LQQV…QQPL) and 154-169 (LQQR…KSQL). A compositionally biased stretch (polar residues) spans 170–200 (NEQNAMMSASTQQYPVQDFTNPYPNAQNPAE). Low complexity-rich tracts occupy residues 201 to 214 (QQQQ…QSQQ) and 233 to 256 (SSIQ…KQQQ). Residues 265-275 (KKKPGRKPKLR) show a composition bias toward basic residues. A compositionally biased stretch (polar residues) spans 279–291 (ESSSETPQVPKTA). Positions 315–342 (CLTCRQRKKRCCETRPRCTECTRLRLNC) form a DNA-binding region, zn(2)-C6 fungal-type. The segment at 345–364 (PKPGTEHKNKPKDQKDDENT) is disordered. The span at 348–364 (GTEHKNKPKDQKDDENT) shows a compositional bias: basic and acidic residues.

Interacts with EFG1.

The protein resides in the nucleus. Functionally, transcriptional regulator of the switch between 2 heritable states, the white and opaque states. These 2 cell types differ in many characteristics, including cell structure, mating competence, and virulence. Each state is heritable for many generations, and switching between states occurs stochastically, at low frequency. Contributes to formation of the opaque state, but is not necessary for heritability of the opaque state. Plays a role in cell adhesion and pseudohyphal growth. Involved in acquisition of drug resistance and acts as a repressor of beta-glucan synthesis, thus negatively regulating cell wall integrity. Plays a role in adherence, invasion and damage to oral epithelial cells. This Candida albicans (strain SC5314 / ATCC MYA-2876) (Yeast) protein is Zinc cluster transcription factor CZF1 (CZF1).